The primary structure comprises 372 residues: Cobalt-precorrin-5B C(1)-methyltransferase (372 aa).

This sequence belongs to the CbiD family.

It catalyses the reaction Co-precorrin-5B + S-adenosyl-L-methionine = Co-precorrin-6A + S-adenosyl-L-homocysteine. It functions in the pathway cofactor biosynthesis; adenosylcobalamin biosynthesis; cob(II)yrinate a,c-diamide from sirohydrochlorin (anaerobic route): step 6/10. Catalyzes the methylation of C-1 in cobalt-precorrin-5B to form cobalt-precorrin-6A. This is Cobalt-precorrin-5B C(1)-methyltransferase from Prochlorococcus marinus (strain MIT 9515).